A 911-amino-acid chain; its full sequence is Viral IRF4-like protein (911 aa).

The IRF tryptophan pentad repeat DNA-binding region spans 7 to 114 (SEWATLWIID…GSYVVWQLVR (108 aa)). Disordered stretches follow at residues 147–184 (TTAT…PRKS), 211–302 (ASTS…SRLP), 494–537 (GGAP…PYVC), and 681–727 (ELQE…FFDP). The segment covering 211 to 221 (ASTSGMGSSGT) has biased composition (low complexity). Composition is skewed to polar residues over residues 222–231 (RQVTQASSFT) and 495–505 (GAPNQGLSHTQ). The segment covering 697–710 (RRPRSRSPHGRRTP) has biased composition (basic residues).

This sequence belongs to the IRF family. Interacts with host MDM2; this interaction facilitates the proteasomal degradation of TP53/p53. Interacts with host IRF7; this interaction prevents IRF7 dimerization and subsequent activation.

The protein resides in the host nucleus. Plays a role in host cell apoptosis modulation by promoting TP53/p53 ubiquitination and subsequent degradation and thus down-regulating TP53/p53-mediated apoptosis. Works as a potential viral transcription factor to modulate host gene expression to build favorable environments for the viral lytic life cycle and greatly accelerates the induction of an immediate early gene RTA, early genes ORF36 and ORF57, late genes ORF25 and ORF64, and latent genes LANA1 and v-IRF3. Inhibits host interferon-alpha production by interacting with host IRF7 and preventing IRF7 dimerization. The sequence is that of Viral IRF4-like protein (vIRF-4) from Homo sapiens (Human).